The chain runs to 130 residues: Small ribosomal subunit protein uS9 (130 aa).

Belongs to the universal ribosomal protein uS9 family.

The protein is Small ribosomal subunit protein uS9 of Bordetella parapertussis (strain 12822 / ATCC BAA-587 / NCTC 13253).